The primary structure comprises 62 residues: uncharacterized protein (62 aa).

A coiled-coil region spans residues 28–61; that stretch reads KIESTHPEIAKKLKEAAEKYREVEEILKKAVDMV.

This is an uncharacterized protein from Archaeoglobus fulgidus (strain ATCC 49558 / DSM 4304 / JCM 9628 / NBRC 100126 / VC-16).